The primary structure comprises 227 residues: UPF0758 protein Dred_2549 (227 aa).

The 123-residue stretch at 105-227 (IIRCPEDVCG…FTSLKSKGLI (123 aa)) folds into the MPN domain. 3 residues coordinate Zn(2+): histidine 176, histidine 178, and aspartate 189. The JAMM motif signature appears at 176–189 (HNHPSGDPTPSRED).

Belongs to the UPF0758 family.

The chain is UPF0758 protein Dred_2549 from Desulforamulus reducens (strain ATCC BAA-1160 / DSM 100696 / MI-1) (Desulfotomaculum reducens).